We begin with the raw amino-acid sequence, 102 residues long: Integration host factor subunit beta (102 aa).

The tract at residues 54 to 102 (HHRPARMGRNPKTGEPVALPAKYVPHFKPGKELRERVNSSRHQAPLRSQ) is disordered. A compositionally biased stretch (basic and acidic residues) spans 82–91 (PGKELRERVN). Polar residues predominate over residues 93-102 (SRHQAPLRSQ).

It belongs to the bacterial histone-like protein family. In terms of assembly, heterodimer of an alpha and a beta chain.

This protein is one of the two subunits of integration host factor, a specific DNA-binding protein that functions in genetic recombination as well as in transcriptional and translational control. The polypeptide is Integration host factor subunit beta (Halorhodospira halophila (strain DSM 244 / SL1) (Ectothiorhodospira halophila (strain DSM 244 / SL1))).